Here is a 91-residue protein sequence, read N- to C-terminus: PqqA binding protein (91 aa).

It belongs to the PqqD family. In terms of assembly, monomer. Interacts with PqqE.

It participates in cofactor biosynthesis; pyrroloquinoline quinone biosynthesis. In terms of biological role, functions as a PqqA binding protein and presents PqqA to PqqE, in the pyrroloquinoline quinone (PQQ) biosynthetic pathway. This Pseudomonas putida (strain W619) protein is PqqA binding protein.